The sequence spans 465 residues: Intraflagellar transport protein 54 (465 aa).

Disordered regions lie at residues 119–301 and 347–366; these read VRSN…GFTM and LHGD…DKKP. Residues 144–207 adopt a coiled-coil conformation; the sequence is LEALAREKAE…KQKQQQQQQQ (64 aa). A compositionally biased stretch (basic and acidic residues) spans 146–198; the sequence is ALAREKAEKERQRREQEQQERERKERERQEKEREEREKHELESRERAEAEQWK. Over residues 199–220 the composition is skewed to low complexity; sequence QKQQQQQQQQQSAISPQKSPPK. Residues 222–242 are compositionally biased toward basic and acidic residues; sequence RFADDDKTRVEEHQPVIERPH.

Belongs to the TRAF3IP1 family.

Its subcellular location is the cell projection. The protein resides in the cilium. The protein localises to the flagellum. It localises to the cytoplasm. It is found in the cytoskeleton. Its subcellular location is the flagellum axoneme. The protein resides in the flagellum basal body. Component of the intraflagellar transport complex B (IFT-B) involved in flagellar assembly. The polypeptide is Intraflagellar transport protein 54 (Giardia intestinalis (strain ATCC 50803 / WB clone C6) (Giardia lamblia)).